The primary structure comprises 737 residues: NAD(P)H-quinone oxidoreductase subunit 5, chloroplastic (737 aa).

Transmembrane regions (helical) follow at residues 9-29 (WIIP…LILF), 40-60 (WAFQ…YLSI), 89-109 (IDPL…MVLI), 125-145 (FAYM…SNLI), 147-167 (IYIF…FWFT), 185-205 (GDFG…SFEF), 219-239 (NELN…GAVA), 258-278 (TPIS…FLVA), 286-306 (VIPY…LLGA), 327-347 (LGYM…FHLI), 354-374 (ALLF…VGYS), 396-416 (ITFL…CFWS), 425-445 (WLYS…TAFY), 543-563 (LFPI…GIPF), 602-622 (VVSV…YKPI), and 717-737 (SYLF…YLLF).

The protein belongs to the complex I subunit 5 family. In terms of assembly, NDH is composed of at least 16 different subunits, 5 of which are encoded in the nucleus.

The protein resides in the plastid. The protein localises to the chloroplast thylakoid membrane. It catalyses the reaction a plastoquinone + NADH + (n+1) H(+)(in) = a plastoquinol + NAD(+) + n H(+)(out). It carries out the reaction a plastoquinone + NADPH + (n+1) H(+)(in) = a plastoquinol + NADP(+) + n H(+)(out). NDH shuttles electrons from NAD(P)H:plastoquinone, via FMN and iron-sulfur (Fe-S) centers, to quinones in the photosynthetic chain and possibly in a chloroplast respiratory chain. The immediate electron acceptor for the enzyme in this species is believed to be plastoquinone. Couples the redox reaction to proton translocation, and thus conserves the redox energy in a proton gradient. In Solanum lycopersicum (Tomato), this protein is NAD(P)H-quinone oxidoreductase subunit 5, chloroplastic (ndhF).